The sequence spans 113 residues: UPF0342 protein SpyM3_0545 (113 aa).

The protein belongs to the UPF0342 family.

The chain is UPF0342 protein SpyM3_0545 from Streptococcus pyogenes serotype M3 (strain ATCC BAA-595 / MGAS315).